The primary structure comprises 235 residues: Uracil-DNA glycosylase (235 aa).

The active-site Proton acceptor is the Asp71.

Belongs to the uracil-DNA glycosylase (UDG) superfamily. UNG family.

It localises to the cytoplasm. It catalyses the reaction Hydrolyzes single-stranded DNA or mismatched double-stranded DNA and polynucleotides, releasing free uracil.. Excises uracil residues from the DNA which can arise as a result of misincorporation of dUMP residues by DNA polymerase or due to deamination of cytosine. This Helicobacter hepaticus (strain ATCC 51449 / 3B1) protein is Uracil-DNA glycosylase.